The following is a 115-amino-acid chain: Peptidyl-tRNA hydrolase (115 aa).

The protein belongs to the PTH2 family.

It is found in the cytoplasm. It carries out the reaction an N-acyl-L-alpha-aminoacyl-tRNA + H2O = an N-acyl-L-amino acid + a tRNA + H(+). Functionally, the natural substrate for this enzyme may be peptidyl-tRNAs which drop off the ribosome during protein synthesis. The sequence is that of Peptidyl-tRNA hydrolase from Archaeoglobus fulgidus (strain ATCC 49558 / DSM 4304 / JCM 9628 / NBRC 100126 / VC-16).